We begin with the raw amino-acid sequence, 326 residues long: Isopenicillin N synthase (326 aa).

Residues arginine 84, tyrosine 88, and tyrosine 186 each contribute to the isopenicillin N site. N-[(5S)-5-amino-5-carboxypentanoyl]-L-cysteinyl-D-valine-binding residues include arginine 84, tyrosine 88, tyrosine 186, histidine 209, and aspartate 211. Positions 183–283 (LIRYPFLENY…RLSIPFFANL (101 aa)) constitute a Fe2OG dioxygenase domain. Fe(2+) contacts are provided by histidine 209, aspartate 211, and histidine 265. Residue arginine 274 coordinates 2-oxoglutarate. Serine 276 is a binding site for isopenicillin N. Serine 276 contributes to the N-[(5S)-5-amino-5-carboxypentanoyl]-L-cysteinyl-D-valine binding site.

The protein belongs to the iron/ascorbate-dependent oxidoreductase family. It depends on Fe cation as a cofactor. L-ascorbate is required as a cofactor.

The catalysed reaction is N-[(5S)-5-amino-5-carboxypentanoyl]-L-cysteinyl-D-valine + O2 = isopenicillin N + 2 H2O. The protein operates within antibiotic biosynthesis; penicillin G biosynthesis; penicillin G from L-alpha-aminoadipate and L-cysteine and L-valine: step 2/3. In terms of biological role, removes, in the presence of oxygen, 4 hydrogen atoms from delta-L-(alpha-aminoadipyl)-L-cysteinyl-D-valine (ACV) to form the azetidinone and thiazolidine rings of isopenicillin. In Flavobacterium sp. (strain SC 12,154), this protein is Isopenicillin N synthase (pcbC).